Reading from the N-terminus, the 57-residue chain is Conotoxin Cal6.39 (57 aa).

An N-terminal signal peptide occupies residues 1–18; it reads MSGTTVLLLTCLFLVTMA. 3 disulfide bridges follow: Cys22–Cys36, Cys29–Cys46, and Cys35–Cys52.

Expressed by the venom duct.

The protein resides in the secreted. Functionally, probable neurotoxin. The chain is Conotoxin Cal6.39 from Californiconus californicus (California cone).